Here is a 239-residue protein sequence, read N- to C-terminus: Geranylgeranylglyceryl phosphate synthase (239 aa).

Residues Asp-18 and Ser-45 each contribute to the Mg(2+) site. Sn-glycerol 1-phosphate-binding positions include 166–172 (YLEAGSG), 197–198 (GG), and 219–220 (GT).

The protein belongs to the GGGP/HepGP synthase family. Group II subfamily. Requires Mg(2+) as cofactor.

It is found in the cytoplasm. The catalysed reaction is sn-glycerol 1-phosphate + (2E,6E,10E)-geranylgeranyl diphosphate = sn-3-O-(geranylgeranyl)glycerol 1-phosphate + diphosphate. The protein operates within membrane lipid metabolism; glycerophospholipid metabolism. In terms of biological role, prenyltransferase that catalyzes the transfer of the geranylgeranyl moiety of geranylgeranyl diphosphate (GGPP) to the C3 hydroxyl of sn-glycerol-1-phosphate (G1P). This reaction is the first ether-bond-formation step in the biosynthesis of archaeal membrane lipids. The polypeptide is Geranylgeranylglyceryl phosphate synthase (Pyrobaculum islandicum (strain DSM 4184 / JCM 9189 / GEO3)).